A 401-amino-acid chain; its full sequence is Enoyl-[acyl-carrier-protein] reductase [NADH] 1 (401 aa).

Residues 48 to 53 (GSSSGY), 74 to 75 (FE), 111 to 112 (DA), and 139 to 140 (LA) each bind NAD(+). A substrate-binding site is contributed by Tyr-225. Tyr-235 functions as the Proton donor in the catalytic mechanism. NAD(+) is bound by residues Lys-244 and 273–275 (VVT).

This sequence belongs to the TER reductase family. Monomer.

The enzyme catalyses a 2,3-saturated acyl-[ACP] + NAD(+) = a (2E)-enoyl-[ACP] + NADH + H(+). It carries out the reaction a 2,3-saturated acyl-CoA + NAD(+) = a (2E)-enoyl-CoA + NADH + H(+). It catalyses the reaction (2E)-butenoyl-[ACP] + NADH + H(+) = butanoyl-[ACP] + NAD(+). The catalysed reaction is butanoyl-CoA + NAD(+) = (2E)-butenoyl-CoA + NADH + H(+). It functions in the pathway lipid metabolism; fatty acid biosynthesis. Weakly inhibited by triclosan. Its function is as follows. Involved in the final reduction of the elongation cycle of fatty acid synthesis (FAS II). Catalyzes the NADH-dependent reduction of a carbon-carbon double bond in an enoyl moiety that is covalently linked to an acyl carrier protein (ACP). It can use both crotonyl-CoA and crotonyl-ACP. This chain is Enoyl-[acyl-carrier-protein] reductase [NADH] 1, found in Vibrio cholerae serotype O1 (strain ATCC 39315 / El Tor Inaba N16961).